Reading from the N-terminus, the 151-residue chain is Myosin catalytic light chain, smooth muscle (151 aa).

An N-acetylalanine modification is found at A1. 3 EF-hand domains span residues 6–41 (DRITECQEAFELFDRSAEGKVFLGQVGDILRALGQN), 83–118 (GSYEDFVEGLRVFDKENNGKIMGAELRHVLSTLGEK), and 119–151 (MSEEEVEESLLQGQQDPNGCIHYEEFSKYLLEG).

In terms of biological role, in molluscan muscle, calcium regulation is associated with myosin rather than with actin. Muscle myosin contains two types of light chains: the catalytic light chain, essential for ATPase activity, and the regulatory light chain, a calcium-binding protein responsible for Ca(2+) dependent binding and Ca(2+) dependent Mg-ATPase activity. This Halocynthia roretzi (Sea squirt) protein is Myosin catalytic light chain, smooth muscle.